We begin with the raw amino-acid sequence, 333 residues long: Acyl-CoA wax alcohol acyltransferase 2 (333 aa).

The next 3 helical transmembrane spans lie at valine 15–valine 35, tyrosine 38–phenylalanine 58, and isoleucine 130–leucine 150.

It belongs to the diacylglycerol acyltransferase family. Monomer. As to expression, highly expressed in skin, where it is primarily restricted to undifferentiated peripheral sebocytes. Also expressed at lower level in other tissues except pancreas.

Its subcellular location is the endoplasmic reticulum membrane. The enzyme catalyses a long chain fatty alcohol + a fatty acyl-CoA = a wax ester + CoA. The catalysed reaction is all-trans-retinol + an acyl-CoA = an all-trans-retinyl ester + CoA. It carries out the reaction an acyl-CoA + a 1,2-diacyl-sn-glycerol = a triacyl-sn-glycerol + CoA. It catalyses the reaction 11-cis-retinol + a fatty acyl-CoA = 11-cis-retinyl ester + CoA. The enzyme catalyses 9-cis-retinol + a fatty acyl-CoA = 9-cis-retinyl ester + CoA. The catalysed reaction is 13-cis-retinol + a fatty acyl-CoA = 13-cis-retinyl ester + CoA. It carries out the reaction a 1-acylglycerol + an acyl-CoA = a 1,2-diacylglycerol + CoA. It catalyses the reaction 1-O-alkylglycerol + an acyl-CoA = 1-O-alkyl-3-acylglycerol + CoA. The enzyme catalyses a 2-acylglycerol + an acyl-CoA = a 1,2-diacyl-sn-glycerol + CoA. The catalysed reaction is 2-(9Z-octadecenoyl)-glycerol + hexadecanoyl-CoA = 1-hexadecanoyl-2-(9Z-octadecenoyl)-sn-glycerol + CoA. It carries out the reaction 1,2-di-(9Z-octadecenoyl)-sn-glycerol + hexadecanoyl-CoA = 1,2-di-(9Z)-octadecenoyl-3-hexadecanoyl-sn-glycerol + CoA. It catalyses the reaction hexadecan-1-ol + hexadecanoyl-CoA = hexadecanyl hexadecanoate + CoA. The enzyme catalyses hexadecane-1,2-diol + hexadecanoyl-CoA = 2-hydroxyhexadecyl hexadecanoate + CoA. The catalysed reaction is 9-cis-retinol + hexadecanoyl-CoA = 9-cis-retinyl hexadecanoate + CoA. It carries out the reaction all-trans-retinol + hexadecanoyl-CoA = all-trans-retinyl hexadecanoate + CoA. It catalyses the reaction 1,2-di-(9Z-octadecenoyl)-sn-glycerol + (9Z)-octadecenoyl-CoA = 1,2,3-tri-(9Z-octadecenoyl)-glycerol + CoA. The enzyme catalyses hexadecan-1-ol + (9Z)-octadecenoyl-CoA = hexadecanyl (9Z)-octadecenoate + CoA. The catalysed reaction is (9Z)-hexadecen-1-ol + (9Z)-octadecenoyl-CoA = 1-O-(9Z)-hexadecenyl (9Z)-octadecenoate + CoA. It carries out the reaction octadecan-1-ol + (9Z)-octadecenoyl-CoA = 1-O-octadecyl (9Z)-octadecenoate + CoA. It catalyses the reaction (9Z)-octadecen-1-ol + (9Z)-octadecenoyl-CoA = 1-O-(9Z)-octadecenyl (9Z)-octadecenoate + CoA. The enzyme catalyses hexadecan-1-ol + (9Z)-hexadecenoyl-CoA = 1-O-hexadecyl (9Z)-hexadecenoate + CoA. The catalysed reaction is hexadecan-1-ol + octadecanoyl-CoA = hexadecanyl octadecanoate + CoA. It carries out the reaction 11-cis-retinol + hexadecanoyl-CoA = 11-cis-retinyl hexadecanoate + CoA. It catalyses the reaction 1-O-(9Z-octadecenyl)-glycerol + (9Z)-octadecenoyl-CoA = 1-O-(9Z-octadecyl)-3-(9Z-octadecenoyl)-glycerol + CoA. The enzyme catalyses 1-(9Z-octadecenoyl)-glycerol + (9Z)-octadecenoyl-CoA = 1,2-di-(9Z-octadecenoyl)-glycerol + CoA. The catalysed reaction is 11-cis-retinol + tetradecanoyl-CoA = 11-cis-retinyl tetradecanoate + CoA. It carries out the reaction 9-cis-retinol + tetradecanoyl-CoA = 9-cis-retinyl tetradecanoate + CoA. It catalyses the reaction 13-cis-retinol + tetradecanoyl-CoA = 13-cis-retinyl tetradecanoate + CoA. The enzyme catalyses all-trans-retinol + tetradecanoyl-CoA = all-trans-retinyl tetradecanoate + CoA. The catalysed reaction is tetradecan-1-ol + tetradecanoyl-CoA = tetradecanyl tetradecanoate + CoA. With respect to regulation, 11-cis retinoids act as allosteric modulators of acyl-CoA retinol O-fatty-acyltransferase (ARAT) activity by suppressing esterification of 9-cis, 13-cis, or all-trans retinols concurrently increasing the enzyme specificity toward 11-cis isomer. Its function is as follows. Acyltransferase that catalyzes the formation of ester bonds between fatty alcohols and fatty acyl-CoAs to form wax monoesters. Shows a preference for medium chain acyl-CoAs from C12 to C16 in length and fatty alcohols shorter than C20, as the acyl donors and acceptors, respectively. Also possesses acyl-CoA retinol acyltransferase (ARAT) activity that preferentially esterifies 11-cis-retinol, a chromophore precursor of bleached opsin pigments in cone cells. Shows higher catalytic efficiency toward 11-cis-retinol versus 9-cis-retinol, 13-cis-retinol, and all-trans-retinol substrates. This is Acyl-CoA wax alcohol acyltransferase 2 (AWAT2) from Homo sapiens (Human).